The following is a 147-amino-acid chain: uncharacterized protein (147 aa).

Residues 11–147 (NTSPGFLLWQ…SGLQELLKHE (137 aa)) form the HTH marR-type domain. Positions 61 to 84 (QKKLASFSQTNIMMVSEVVRTLEK) form a DNA-binding region, H-T-H motif.

This is an uncharacterized protein from Bacillus subtilis (strain 168).